Here is a 1520-residue protein sequence, read N- to C-terminus: MNKKFKYKKSLLAAILSATLLAGCDGGGSGSSSDTPPVDSGTGSLPEVKPDPTPNPEPTPEPTPDPEPTPEPIPDPEPTPEPEPEPVPTKTGYLTLGGSQRVTGATCNGESSDGFTFKPGEDVTCVAGNTTIATFNTQSEAARSLRAVEKVSFSLEDAQELAGSDDKKSNAVSLVTSSNSCPANTEQVCLTFSSVIESKRFDSLYKQIDLAPEEFKKLVNEEVENNAATDKAPSTHTSPVVPVTTPGTKPDLNASFVSANAEQFYQYQPTEIILSEGRLVDSQGYGVAGVNYYTNSGRGVTGENGEFSFSWGETISFGIDTFELGSVRGNKSTIALTELGDEVRGANIDQLIHRYSTTGQNNTRVVPDDVRKVFAEYPNVINEIINLSLSNGATLGEGEQVVNLPNEFIEQFNTGQAKEIDTAICAKTDGCNEARWFSLTTRNVNDGQIQGVINKLWGVDTNYKSVSKFHVFHDSTNFYGSTGNARGQAVVNISNAAFPILMARNDKNYWLAFGEKRAWDKNELAYITEAPSLVEPENVTRDTATFNLPFISLGQVGEGKLMVIGNPHYNSILRCPNGYSWNGGVNKDGQCTLNSDPDDMKNFMENVLRYLSDDKWKPDAKASMTVGTNLDTVYFKRHGQVTGNSAAFDFHPDFAGISVEHLSSYGDLDPQEMPLLILNGFEYVTQVGNDPYAIPLRADTSKPKLTQQDVTDLIAYLNKGGSVLIMENVMSNLKEESASGFVRLLDAAGLSMALNKSVVNNDPQGYPNRVRQQRATGIWVYERYPAVDGALPYTIDSKTGEVKWKYQVENKPDDKPKLEVASWLEDVDGKQETRYAFIDEADHKTEDSLKAAKEKIFAAFPGLKECTNPAYHYEVNCLEYRPGTGVPVTGGMYVPQYTQLSLNADTAKAMVQAADLGTNIQRLYQHELYFRTNGRKGERLSSVDLERLYQNMSVWLWNDTSYRYEEGKNDELGFKTFTEFLNCYANDAYAGGTKCSADLKKSLVDNNMIYGDGSSKAGMMNPSYPLNYMEKPLTRLMLGRSWWDLNIKVDVEKYPGAVSEEGQNVTETISLYSNPTKWFAGNMQSTGLWAPAQKEVTIKSNANVPVTVTVALADDLTGREKHEVALNRPPRVTKTYSLDASGTVKFKVPYGGLIYIKGNSSTNESASFTFTGVVKAPFYKDGAWKNDLNSPAPLGELESDAFVYTTPKKNLNASNYTGGLEQFANDLDTFASSMNDFYGRDSEDGKHRMFTYKNLPGHKHRFTNDVQISIGDAHSGYPVMNSSFSPNSTTLPTTPLNDWLIWHEVGHNAAETPLTVPGATEVANNVLALYMQDRYLGKMNRVADDITVAPEYLEESNNQAWARGGAGDRLLMYAQLKEWAEKNFDIKKWYPDGTPLPEFYSEREGMKGWNLFQLMHRKARGDEVSNDKFGGKNYCAESNGNAADTLMLCASWVAQTDLSEFFKKWNPGANAYQLPGASEMSFEGGVSQSAYNTLASLDLPKPEQGPETINQVTEHKMSAE.

Residues 1 to 23 form the signal peptide; it reads MNKKFKYKKSLLAAILSATLLAG. 2 disordered regions span residues 22 to 107 and 226 to 247; these read AGCD…GATC and NAATDKAPSTHTSPVVPVTTPG. Cys24 is lipidated: N-palmitoyl cysteine. Residue Cys24 is the site of S-diacylglycerol cysteine attachment. Residues 31 to 42 show a composition bias toward low complexity; the sequence is SSSDTPPVDSGT. The segment covering 51 to 77 has biased composition (pro residues); it reads DPTPNPEPTPEPTPDPEPTPEPIPDPE. Residues 97–107 show a composition bias toward polar residues; the sequence is GGSQRVTGATC. Low complexity predominate over residues 234–247; sequence STHTSPVVPVTTPG. The Peptidase M60 domain occupies 1081–1381; the sequence is GNMQSTGLWA…MYAQLKEWAE (301 aa). The segment at 1498-1520 is disordered; that stretch reads DLPKPEQGPETINQVTEHKMSAE.

This sequence to V.cholerae AcfD (VC_0845).

It is found in the cell inner membrane. Functionally, involved in a type II secretion system (T2SS, formerly general secretion pathway, GSP) for the export of folded proteins across the outer membrane. The sequence is that of Putative lipoprotein AcfD homolog (yghJ) from Escherichia coli (strain K12).